The sequence spans 133 residues: Small ribosomal subunit protein uS8 (133 aa).

The protein belongs to the universal ribosomal protein uS8 family. Part of the 30S ribosomal subunit. Contacts proteins S5 and S12.

Functionally, one of the primary rRNA binding proteins, it binds directly to 16S rRNA central domain where it helps coordinate assembly of the platform of the 30S subunit. The chain is Small ribosomal subunit protein uS8 from Orientia tsutsugamushi (strain Boryong) (Rickettsia tsutsugamushi).